The primary structure comprises 1305 residues: ABC transporter FPSE_09185 (1305 aa).

A glycan (N-linked (GlcNAc...) asparagine) is linked at Asn-28. 6 helical membrane passes run 44 to 64 (FCVYVVGALASIGVGVTMPLM), 99 to 119 (LYIVGLFLGRWLLNSINKFCF), 172 to 192 (RLGTFVTYVSTIIAAIAVAFT), 199 to 219 (IVSASLLVYIAIIIAIVVPIY), 277 to 297 (IIGAQTGLVFFGIFGVFGLAF), and 312 to 332 (VGVVIIVLTSVMLILFAFSYL). The 301-residue stretch at 48–348 (VVGALASIGV…ISQAMVAATE (301 aa)) folds into the ABC transmembrane type-1 1 domain. Residues 372-663 (LIFKDVTFEY…ENGVYYSLVE (292 aa)) enclose the ABC transporter 1 domain. An ATP-binding site is contributed by 407 to 414 (GPSGSGKS). Residues 434 to 454 (EAATPRSSKEGERDNHDERKY) form a disordered region. Residues 440–454 (SSKEGERDNHDERKY) show a composition bias toward basic and acidic residues. Asn-468, Asn-507, and Asn-525 each carry an N-linked (GlcNAc...) asparagine glycan. Transmembrane regions (helical) follow at residues 737–757 (FLLITIASMGVGAATPLQAWL), 780–800 (GFMWLALAGGVGVAYFFQCWI), 851–873 (GVFGLNLASATSSVFTIVGCLII), 877–899 (FGWKLGLVGLCVTVPIMMVSGFW), 964–984 (AVIFGFAESATLGCQALILWY), and 999–1019 (FMVSYMAIINGVEYAGQILGV). The ABC transmembrane type-1 2 domain maps to 738–1025 (LLITIASMGV…ILGVAPSAAQ (288 aa)). The disordered stretch occupies residues 1038-1057 (DSNRSSQEAEKSGPTVEDTD). N-linked (GlcNAc...) asparagine glycosylation is found at Asn-1040, Asn-1066, and Asn-1075. The region spanning 1062 to 1300 (IELCNVSFKY…RGIYWDMCQT (239 aa)) is the ABC transporter 2 domain. 1096-1103 (GPSGCGKT) contributes to the ATP binding site. The N-linked (GlcNAc...) asparagine glycan is linked to Asn-1125.

It belongs to the ABC transporter superfamily. ABCB family. Multidrug resistance exporter (TC 3.A.1.201) subfamily.

The protein resides in the membrane. Functionally, ABC transporter; part of the gene cluster that mediates the biosynthesis of the lipopeptides W493 A and B. W493 A and B consist of six amino acid residues D-allo-thr, L-Ala, D-Ala, L-Gln, D-Tyr, and L-Val/L-Ile linked to a 3-hydroxy-4-methyltetradecanoic acid polyketide chain. May be involved in excretion or internal transport of W493 A and B. This chain is ABC transporter FPSE_09185, found in Fusarium pseudograminearum (strain CS3096) (Wheat and barley crown-rot fungus).